Consider the following 450-residue polypeptide: Protein tweety homolog 1 (450 aa).

At 1-43 (MGAPPGYRPSAWVHLLHQLPRADFQLRPVPSAFAPQEREYQQA) the chain is on the extracellular side. The chain crosses the membrane as a helical span at residues 44-64 (LLLVAALAGLGLGLSLIFIAV). Topologically, residues 65–88 (YLIRFCCCRPPEPPGAKSPPPGGG) are cytoplasmic. The helical transmembrane segment at 89 to 109 (CVTWNCIAALLVGCAGIGVGF) threads the bilayer. Residues 110–214 (YGNSETSDGV…DVSFVEEYRW (105 aa)) are Extracellular-facing. An N-linked (GlcNAc...) asparagine glycan is attached at N130. A helical membrane pass occupies residues 215 to 235 (LAYVLLLLLELLVCLFTLLGL). Residues 236 to 240 (ARQSK) are Cytoplasmic-facing. The helical transmembrane segment at 241–261 (WLVIVMTVMSLLVLVLSWGSM) threads the bilayer. At 262-390 (GLEAATAVGL…LRGLCEDTLE (129 aa)) the chain is on the extracellular side. 2 cysteine pairs are disulfide-bonded: C275–C385 and C303–C370. Residues N284 and N355 are each glycosylated (N-linked (GlcNAc...) asparagine). The chain crosses the membrane as a helical span at residues 391-411 (GLLFLLLFSLLSAGALATVLC). Topologically, residues 412–450 (SLPRAWALFPPSDDYEDTDDDDPFNPQESKRFVQWQSSI) are cytoplasmic. Residues 427-450 (EDTDDDDPFNPQESKRFVQWQSSI) form a disordered region. S440 is modified (phosphoserine).

The protein belongs to the tweety family. As to quaternary structure, homotetramer; disulfide-linked. Homodimer. In terms of processing, N-glycosylated. Contains high-mannose, hybrid and complex oligosaccharides.

It is found in the cell membrane. It carries out the reaction chloride(in) = chloride(out). The catalysed reaction is L-glutamate(out) = L-glutamate(in). In terms of biological role, calcium-independent, swelling-dependent volume-regulated anion channel (VRAC-swell) which plays a pivotal role in the process of regulatory volume decrease (RVD) in the brain through the efflux of anions like chloride and organic osmolytes like glutamate. This chain is Protein tweety homolog 1 (TTYH1), found in Bos taurus (Bovine).